The following is a 57-amino-acid chain: Large ribosomal subunit protein bL32 (57 aa).

Residues 1–38 are disordered; it reads MAVQQNKPTRSKRGMRRSHDALTAVTSLSVDQTSGEKH. Residues 24 to 33 show a composition bias toward polar residues; the sequence is AVTSLSVDQT.

Belongs to the bacterial ribosomal protein bL32 family.

The protein is Large ribosomal subunit protein bL32 of Enterobacter sp. (strain 638).